A 776-amino-acid polypeptide reads, in one-letter code: DNA ligase (776 aa).

NAD(+) is bound by residues Asp-31 to Asp-35, Ser-80 to Leu-81, and Glu-112. The active-site N6-AMP-lysine intermediate is the Lys-114. Residues Arg-135, Glu-172, Lys-288, and Lys-312 each contribute to the NAD(+) site. Zn(2+) is bound by residues Cys-406, Cys-409, Cys-436, and Cys-442. Residues Ala-693–Val-776 form the BRCT domain.

This sequence belongs to the NAD-dependent DNA ligase family. LigA subfamily. The cofactor is Mg(2+). Mn(2+) serves as cofactor.

It carries out the reaction NAD(+) + (deoxyribonucleotide)n-3'-hydroxyl + 5'-phospho-(deoxyribonucleotide)m = (deoxyribonucleotide)n+m + AMP + beta-nicotinamide D-nucleotide.. DNA ligase that catalyzes the formation of phosphodiester linkages between 5'-phosphoryl and 3'-hydroxyl groups in double-stranded DNA using NAD as a coenzyme and as the energy source for the reaction. It is essential for DNA replication and repair of damaged DNA. The protein is DNA ligase of Pseudomonas putida (strain ATCC 700007 / DSM 6899 / JCM 31910 / BCRC 17059 / LMG 24140 / F1).